We begin with the raw amino-acid sequence, 65 residues long: Potassium channel toxin kappa-KTx 2.6 (65 aa).

Positions 1 to 27 are cleaved as a signal peptide; sequence MKTSKMICAFLLVLVVGTFNDISGAYG. Residues 28–39 constitute a propeptide that is removed on maturation; sequence EYVEDQHSFKIE. Disulfide bonds link Cys45/Cys63 and Cys49/Cys59.

The protein belongs to the short scorpion toxin superfamily. Potassium channel inhibitor kappa-KTx family. Kappa-KTx 2 subfamily. In terms of tissue distribution, expressed by the venom gland.

The protein localises to the secreted. Potassium channel inhibitor (Kv). This chain is Potassium channel toxin kappa-KTx 2.6, found in Opisthacanthus cayaporum (South American scorpion).